Reading from the N-terminus, the 146-residue chain is MDIQAIKEFLPHRYPFLLVDRVLECEPGKRLLAIKNVTYNEPFFQGHFPRVPIMPGVLIIEALAQTTGLLASETAPDVLGKGATYYLVGLDKVRFKRPVVPGDQLRLEATYLRHKRNIWAFACRADVEGEFVASAEIMCAAAEQGS.

Residue His47 is part of the active site.

Belongs to the thioester dehydratase family. FabZ subfamily.

It localises to the cytoplasm. The catalysed reaction is a (3R)-hydroxyacyl-[ACP] = a (2E)-enoyl-[ACP] + H2O. In terms of biological role, involved in unsaturated fatty acids biosynthesis. Catalyzes the dehydration of short chain beta-hydroxyacyl-ACPs and long chain saturated and unsaturated beta-hydroxyacyl-ACPs. In Methylococcus capsulatus (strain ATCC 33009 / NCIMB 11132 / Bath), this protein is 3-hydroxyacyl-[acyl-carrier-protein] dehydratase FabZ.